We begin with the raw amino-acid sequence, 122 residues long: Large ribosomal subunit protein uL14 (122 aa).

Belongs to the universal ribosomal protein uL14 family. In terms of assembly, part of the 50S ribosomal subunit. Forms a cluster with proteins L3 and L19. In the 70S ribosome, L14 and L19 interact and together make contacts with the 16S rRNA in bridges B5 and B8.

Binds to 23S rRNA. Forms part of two intersubunit bridges in the 70S ribosome. The polypeptide is Large ribosomal subunit protein uL14 (Hydrogenovibrio crunogenus (strain DSM 25203 / XCL-2) (Thiomicrospira crunogena)).